Consider the following 179-residue polypeptide: MIMGSIARRYAKALFSLAVEKGRVEPWSESLQSLKEGVEGSPDLREVLSNPVYSREQRRAIVEKLAAALRLESEPANLLFLLGDRNRLGYLGAIVDTFRALADEHLGRVRAKVTSAVPLDGSAAQAIADRLSQATQATVLLDREVDPALLGGVVAQVGSLVYDGSLRTQLEDLRRQLKQ.

It belongs to the ATPase delta chain family. F-type ATPases have 2 components, F(1) - the catalytic core - and F(0) - the membrane proton channel. F(1) has five subunits: alpha(3), beta(3), gamma(1), delta(1), epsilon(1). F(0) has three main subunits: a(1), b(2) and c(10-14). The alpha and beta chains form an alternating ring which encloses part of the gamma chain. F(1) is attached to F(0) by a central stalk formed by the gamma and epsilon chains, while a peripheral stalk is formed by the delta and b chains.

Its subcellular location is the cell inner membrane. Functionally, f(1)F(0) ATP synthase produces ATP from ADP in the presence of a proton or sodium gradient. F-type ATPases consist of two structural domains, F(1) containing the extramembraneous catalytic core and F(0) containing the membrane proton channel, linked together by a central stalk and a peripheral stalk. During catalysis, ATP synthesis in the catalytic domain of F(1) is coupled via a rotary mechanism of the central stalk subunits to proton translocation. Its function is as follows. This protein is part of the stalk that links CF(0) to CF(1). It either transmits conformational changes from CF(0) to CF(1) or is implicated in proton conduction. This chain is ATP synthase subunit delta, found in Anaeromyxobacter sp. (strain Fw109-5).